A 386-amino-acid chain; its full sequence is Lycopene beta-cyclase (386 aa).

Residue 4–34 (DVLLAGAGLANGLIALALRAARPDLRVLLLD) coordinates NAD(+).

This sequence belongs to the lycopene cyclase family. It depends on FAD as a cofactor.

The catalysed reaction is a carotenoid psi-end group = a carotenoid beta-end derivative. It catalyses the reaction all-trans-lycopene = gamma-carotene. It carries out the reaction gamma-carotene = all-trans-beta-carotene. The protein operates within carotenoid biosynthesis; astaxanthin biosynthesis. Catalyzes the double cyclization reaction which converts lycopene to beta-carotene. The protein is Lycopene beta-cyclase of Paracoccus sp. (strain N81106 / MBIC 01143) (Agrobacterium aurantiacum).